The primary structure comprises 208 residues: Large ribosomal subunit protein uL3 (208 aa).

Residues 130–168 (GGSKTHGQSDRLRAPGSVGGSSFPSRTFKGQRMAGRKGS) form a disordered region.

This sequence belongs to the universal ribosomal protein uL3 family. In terms of assembly, part of the 50S ribosomal subunit. Forms a cluster with proteins L14 and L19.

Functionally, one of the primary rRNA binding proteins, it binds directly near the 3'-end of the 23S rRNA, where it nucleates assembly of the 50S subunit. This chain is Large ribosomal subunit protein uL3, found in Chloroherpeton thalassium (strain ATCC 35110 / GB-78).